The following is a 437-amino-acid chain: Glutamate-1-semialdehyde 2,1-aminomutase (437 aa).

Lys-272 is subject to N6-(pyridoxal phosphate)lysine.

The protein belongs to the class-III pyridoxal-phosphate-dependent aminotransferase family. HemL subfamily. Homodimer. It depends on pyridoxal 5'-phosphate as a cofactor.

It localises to the cytoplasm. It catalyses the reaction (S)-4-amino-5-oxopentanoate = 5-aminolevulinate. It functions in the pathway porphyrin-containing compound metabolism; protoporphyrin-IX biosynthesis; 5-aminolevulinate from L-glutamyl-tRNA(Glu): step 2/2. This chain is Glutamate-1-semialdehyde 2,1-aminomutase, found in Moorella thermoacetica (strain ATCC 39073 / JCM 9320).